The sequence spans 366 residues: Protein-glutamate methylesterase/protein-glutamine glutaminase 2 (366 aa).

The region spanning 3 to 119 is the Response regulatory domain; that stretch reads RLLIADDSAL…SLELDRLRPL (117 aa). 4-aspartylphosphate is present on Asp-53. The segment at 149–168 is disordered; it reads AASSPRAKAARRGAARQRAK. The span at 156 to 166 shows a compositional bias: basic residues; it reads KAARRGAARQR. The region spanning 171-363 is the CheB-type methylesterase domain; it reads PAPGLVLIGT…AAVIEWGNAD (193 aa). Residues Ser-181, His-208, and Asp-305 contribute to the active site.

This sequence belongs to the CheB family. Post-translationally, phosphorylated by CheA. Phosphorylation of the N-terminal regulatory domain activates the methylesterase activity.

It is found in the cytoplasm. The catalysed reaction is [protein]-L-glutamate 5-O-methyl ester + H2O = L-glutamyl-[protein] + methanol + H(+). The enzyme catalyses L-glutaminyl-[protein] + H2O = L-glutamyl-[protein] + NH4(+). In terms of biological role, involved in chemotaxis. Part of a chemotaxis signal transduction system that modulates chemotaxis in response to various stimuli. Catalyzes the demethylation of specific methylglutamate residues introduced into the chemoreceptors (methyl-accepting chemotaxis proteins or MCP) by CheR. Also mediates the irreversible deamidation of specific glutamine residues to glutamic acid. In Rhodopseudomonas palustris (strain BisB18), this protein is Protein-glutamate methylesterase/protein-glutamine glutaminase 2.